The following is a 301-amino-acid chain: Phosphoglycolate phosphatase 2 (301 aa).

Residue Asp-19 is the Nucleophile of the active site.

The protein belongs to the HAD-like hydrolase superfamily. CbbY/CbbZ/Gph/YieH family.

The catalysed reaction is 2-phosphoglycolate + H2O = glycolate + phosphate. Dephosphorylates 2-phosphoglycolate, but does not contribute to photorespiratory metabolism. In Arabidopsis thaliana (Mouse-ear cress), this protein is Phosphoglycolate phosphatase 2 (PGLP2).